A 216-amino-acid chain; its full sequence is Protein-L-isoaspartate O-methyltransferase (216 aa).

The active site involves Ser-61.

Belongs to the methyltransferase superfamily. L-isoaspartyl/D-aspartyl protein methyltransferase family.

Its subcellular location is the cytoplasm. The catalysed reaction is [protein]-L-isoaspartate + S-adenosyl-L-methionine = [protein]-L-isoaspartate alpha-methyl ester + S-adenosyl-L-homocysteine. In terms of biological role, catalyzes the methyl esterification of L-isoaspartyl residues in peptides and proteins that result from spontaneous decomposition of normal L-aspartyl and L-asparaginyl residues. It plays a role in the repair and/or degradation of damaged proteins. The polypeptide is Protein-L-isoaspartate O-methyltransferase (pcm) (Pyrococcus abyssi (strain GE5 / Orsay)).